The sequence spans 488 residues: UDP-glycosyltransferase 92A1 (488 aa).

Residues Ser292, 358–360 (APQ), 375–383 (HCGWNSILE), and 397–400 (AAEQ) each bind UDP-alpha-D-glucose.

The protein belongs to the UDP-glycosyltransferase family.

The sequence is that of UDP-glycosyltransferase 92A1 (UGT92A1) from Arabidopsis thaliana (Mouse-ear cress).